Consider the following 192-residue polypeptide: Potassium-transporting ATPase KdpC subunit (192 aa).

A helical membrane pass occupies residues 7-27; sequence PLIVIFAVLTAVTGLAYPAVM.

It belongs to the KdpC family. The system is composed of three essential subunits: KdpA, KdpB and KdpC.

Its subcellular location is the cell inner membrane. In terms of biological role, part of the high-affinity ATP-driven potassium transport (or Kdp) system, which catalyzes the hydrolysis of ATP coupled with the electrogenic transport of potassium into the cytoplasm. This subunit acts as a catalytic chaperone that increases the ATP-binding affinity of the ATP-hydrolyzing subunit KdpB by the formation of a transient KdpB/KdpC/ATP ternary complex. The polypeptide is Potassium-transporting ATPase KdpC subunit (Paraburkholderia phytofirmans (strain DSM 17436 / LMG 22146 / PsJN) (Burkholderia phytofirmans)).